Reading from the N-terminus, the 396-residue chain is Cystathionine beta-lyase (396 aa).

Position 214 is an N6-(pyridoxal phosphate)lysine (Lys-214).

This sequence belongs to the trans-sulfuration enzymes family. As to quaternary structure, homodimer. Requires pyridoxal 5'-phosphate as cofactor.

The protein resides in the cytoplasm. The catalysed reaction is L,L-cystathionine + H2O = L-homocysteine + pyruvate + NH4(+). It catalyses the reaction an S-substituted L-cysteine + H2O = a thiol + pyruvate + NH4(+). It functions in the pathway amino-acid biosynthesis; L-methionine biosynthesis via de novo pathway; L-homocysteine from L-cystathionine: step 1/1. In terms of biological role, catalyzes the cleavage of cystathionine to homocysteine, pyruvate and ammonia during methionine biosynthesis. Also has cytotoxic activity toward osteogenic, osteosarcoma and tracheal cells, in vitro. The chemical basis for cell toxicity might be the formation and subsequent transfer of sulfane-sulfur to proteins, derived via beta-cystathionase cleavage of L-cystine. The chain is Cystathionine beta-lyase (metC) from Bordetella avium.